A 379-amino-acid chain; its full sequence is UDP-4-amino-4-deoxy-L-arabinose--oxoglutarate aminotransferase (379 aa).

Position 182 is an N6-(pyridoxal phosphate)lysine (lysine 182).

Belongs to the DegT/DnrJ/EryC1 family. ArnB subfamily. As to quaternary structure, homodimer. Pyridoxal 5'-phosphate is required as a cofactor.

The enzyme catalyses UDP-4-amino-4-deoxy-beta-L-arabinose + 2-oxoglutarate = UDP-beta-L-threo-pentopyranos-4-ulose + L-glutamate. It functions in the pathway nucleotide-sugar biosynthesis; UDP-4-deoxy-4-formamido-beta-L-arabinose biosynthesis; UDP-4-deoxy-4-formamido-beta-L-arabinose from UDP-alpha-D-glucuronate: step 2/3. Its pathway is bacterial outer membrane biogenesis; lipopolysaccharide biosynthesis. Its function is as follows. Catalyzes the conversion of UDP-4-keto-arabinose (UDP-Ara4O) to UDP-4-amino-4-deoxy-L-arabinose (UDP-L-Ara4N). The modified arabinose is attached to lipid A and is required for resistance to polymyxin and cationic antimicrobial peptides. The protein is UDP-4-amino-4-deoxy-L-arabinose--oxoglutarate aminotransferase of Shigella sonnei (strain Ss046).